Consider the following 133-residue polypeptide: Small ribosomal subunit protein uS9 (133 aa).

Belongs to the universal ribosomal protein uS9 family.

In Ureaplasma urealyticum serovar 10 (strain ATCC 33699 / Western), this protein is Small ribosomal subunit protein uS9.